We begin with the raw amino-acid sequence, 20 residues long: Punein (20 aa).

The Barwin domain maps to tyrosine 1–proline 20.

The N-terminus is blocked.

The chain is Punein from Punica granatum (Pomegranate).